A 47-amino-acid chain; its full sequence is Small, acid-soluble spore protein K (47 aa).

Residues 1–47 form a disordered region; that stretch reads MRNKAHGFPHRISFDGEPDRAKHASKRANGTINTKPQERMHQANPDQ. A compositionally biased stretch (basic and acidic residues) spans 12 to 22; it reads ISFDGEPDRAK.

It belongs to the SspK family.

The protein localises to the spore core. This chain is Small, acid-soluble spore protein K, found in Halalkalibacterium halodurans (strain ATCC BAA-125 / DSM 18197 / FERM 7344 / JCM 9153 / C-125) (Bacillus halodurans).